A 312-amino-acid polypeptide reads, in one-letter code: Ribosomal RNA small subunit methyltransferase H (312 aa).

S-adenosyl-L-methionine contacts are provided by residues 32–34, aspartate 51, phenylalanine 78, aspartate 99, and glutamine 106; that span reads AGH.

This sequence belongs to the methyltransferase superfamily. RsmH family.

The protein localises to the cytoplasm. It catalyses the reaction cytidine(1402) in 16S rRNA + S-adenosyl-L-methionine = N(4)-methylcytidine(1402) in 16S rRNA + S-adenosyl-L-homocysteine + H(+). In terms of biological role, specifically methylates the N4 position of cytidine in position 1402 (C1402) of 16S rRNA. This Exiguobacterium sibiricum (strain DSM 17290 / CCUG 55495 / CIP 109462 / JCM 13490 / 255-15) protein is Ribosomal RNA small subunit methyltransferase H.